A 962-amino-acid chain; its full sequence is Glycine dehydrogenase (decarboxylating) (962 aa).

Position 709 is an N6-(pyridoxal phosphate)lysine (K709).

This sequence belongs to the GcvP family. As to quaternary structure, the glycine cleavage system is composed of four proteins: P, T, L and H. The cofactor is pyridoxal 5'-phosphate.

It carries out the reaction N(6)-[(R)-lipoyl]-L-lysyl-[glycine-cleavage complex H protein] + glycine + H(+) = N(6)-[(R)-S(8)-aminomethyldihydrolipoyl]-L-lysyl-[glycine-cleavage complex H protein] + CO2. In terms of biological role, the glycine cleavage system catalyzes the degradation of glycine. The P protein binds the alpha-amino group of glycine through its pyridoxal phosphate cofactor; CO(2) is released and the remaining methylamine moiety is then transferred to the lipoamide cofactor of the H protein. The polypeptide is Glycine dehydrogenase (decarboxylating) (Shewanella frigidimarina (strain NCIMB 400)).